The chain runs to 435 residues: 3-phosphoshikimate 1-carboxyvinyltransferase (435 aa).

Residues Lys-21, Ser-22, and Arg-26 each contribute to the 3-phosphoshikimate site. Position 21 (Lys-21) interacts with phosphoenolpyruvate. Positions 100 and 128 each coordinate phosphoenolpyruvate. Ser-171, Ser-172, Gln-173, Ser-199, Asp-313, and Lys-340 together coordinate 3-phosphoshikimate. Gln-173 is a phosphoenolpyruvate binding site. The Proton acceptor role is filled by Asp-313. The phosphoenolpyruvate site is built by Arg-344, Arg-386, and Lys-412.

Belongs to the EPSP synthase family. In terms of assembly, monomer.

The protein resides in the cytoplasm. It catalyses the reaction 3-phosphoshikimate + phosphoenolpyruvate = 5-O-(1-carboxyvinyl)-3-phosphoshikimate + phosphate. It functions in the pathway metabolic intermediate biosynthesis; chorismate biosynthesis; chorismate from D-erythrose 4-phosphate and phosphoenolpyruvate: step 6/7. In terms of biological role, catalyzes the transfer of the enolpyruvyl moiety of phosphoenolpyruvate (PEP) to the 5-hydroxyl of shikimate-3-phosphate (S3P) to produce enolpyruvyl shikimate-3-phosphate and inorganic phosphate. The sequence is that of 3-phosphoshikimate 1-carboxyvinyltransferase from Clostridium novyi (strain NT).